The following is a 164-amino-acid chain: SVVVDTNGQPVSNGADAYYLVPVSHGHAGLALAKIGNEAEPRAVVLDPHHRPGLPVRFESPLRINIIKESYFLNIKFGPSSSDSGVWDVIQQDPIGLAVKVTDTKSLLGPFKVEKEGEGYKIVYYPERGQTGLDIGLVHRNDKYYLAVKDGEPCVFKIRKATDE.

The protein belongs to the protease inhibitor I3 (leguminous Kunitz-type inhibitor) family. In terms of assembly, monomer.

Its subcellular location is the secreted. In terms of biological role, inhibits bovine trypsin, human plasma kallikrein and plasmin and weakly bovine chymotrypsin. The protein is Kunitz-type serine protease inhibitor BbKI of Bauhinia bauhinioides (Perlebia bauhinoides).